Consider the following 63-residue polypeptide: Megourin-1 (63 aa).

As to quaternary structure, monomer. In terms of processing, contains four disulfide bonds.

The protein resides in the secreted. In terms of biological role, has antimicrobial activity against Gram-positive bacteria and fungi. The sequence is that of Megourin-1 from Megoura viciae (Vetch aphid).